Here is a 397-residue protein sequence, read N- to C-terminus: Plasma membrane iron permease (397 aa).

A run of 4 helical transmembrane segments spans residues 61–81, 92–112, 177–197, and 292–312; these read FTAL…FYAL, IWEG…GFAM, AFPL…YFIY, and GSIL…FLMW. Serine 337 and serine 338 each carry phosphoserine. Residues 337–346 show a composition bias toward polar residues; sequence SSHTPVQSSS. A disordered region spans residues 337–364; it reads SSHTPVQSSSSEDEFKINSPTDDKGDKA. Threonine 340 carries the post-translational modification Phosphothreonine. Phosphoserine is present on residues serine 346, serine 347, and serine 355. Residues 349–364 are compositionally biased toward basic and acidic residues; sequence DEFKINSPTDDKGDKA. Threonine 357 carries the phosphothreonine modification. Phosphoserine occurs at positions 374, 375, and 376.

This sequence belongs to the oxidase-dependent Fe transporter (OFeT) (TC 9.A.10.1) family.

It localises to the membrane. Permease for high affinity iron uptake. This is Plasma membrane iron permease (fip1) from Schizosaccharomyces pombe (strain 972 / ATCC 24843) (Fission yeast).